We begin with the raw amino-acid sequence, 92 residues long: Small ribosomal subunit protein uS19c (92 aa).

The protein belongs to the universal ribosomal protein uS19 family.

Its subcellular location is the plastid. It localises to the cyanelle. Protein S19 forms a complex with S13 that binds strongly to the 16S ribosomal RNA. In Cyanophora paradoxa, this protein is Small ribosomal subunit protein uS19c (rps19).